The primary structure comprises 339 residues: Heme A synthase (339 aa).

A run of 8 helical transmembrane segments spans residues 7-27 (VIIW…VGGI), 92-112 (HRFI…YFLI), 126-146 (ILLG…KSGL), 159-179 (LHLT…LDLI), 199-219 (AIII…AGLI), 254-274 (VQFV…FLTF), 291-311 (ALLI…LYSV), and 312-332 (PLWL…TTTY). His-258 provides a ligand contact to heme. His-319 serves as a coordination point for heme.

It belongs to the COX15/CtaA family. Type 2 subfamily. In terms of assembly, interacts with CtaB. It depends on heme b as a cofactor.

The protein resides in the cell membrane. It catalyses the reaction Fe(II)-heme o + 2 A + H2O = Fe(II)-heme a + 2 AH2. Its pathway is porphyrin-containing compound metabolism; heme A biosynthesis; heme A from heme O: step 1/1. Its function is as follows. Catalyzes the conversion of heme O to heme A by two successive hydroxylations of the methyl group at C8. The first hydroxylation forms heme I, the second hydroxylation results in an unstable dihydroxymethyl group, which spontaneously dehydrates, resulting in the formyl group of heme A. This is Heme A synthase from Flavobacterium psychrophilum (strain ATCC 49511 / DSM 21280 / CIP 103535 / JIP02/86).